We begin with the raw amino-acid sequence, 254 residues long: Bax inhibitor 1 homolog (254 aa).

Over 1-43 (MASTSNRNFFSSNMTQIPMDEKIRIALQFNNLSQSTKQTLTKV) the chain is Cytoplasmic. Residues 44–64 (YCALAIGILTATVGVLFSMFI) traverse the membrane as a helical segment. Residues 65-66 (YR) lie on the Lumenal side of the membrane. Residues 67–87 (PGFLMTLLLVIGSAILFATTP) traverse the membrane as a helical segment. Topologically, residues 88–98 (RTQDYKTQVKR) are cytoplasmic. The helical transmembrane segment at 99–119 (FTLFNLVTFVTGMSSSGLIEL) threads the bilayer. The Lumenal segment spans residues 120-126 (YMDINSS). A helical transmembrane segment spans residues 127 to 147 (IVLNAFMATCGIFISFTLFSL). Residues 148-152 (LTNKR) are Cytoplasmic-facing. Residues 153-173 (LYIFIGSSLASLSIGIFVLAL) form a helical membrane-spanning segment. Residues 174–187 (TRLFGGYSEPLDQL) lie on the Lumenal side of the membrane. A helical membrane pass occupies residues 188-208 (FILAILASSVLFIIFDTQIMV). Over 209 to 217 (HRIENLGEK) the chain is Cytoplasmic. Residues 218 to 238 (DVLFHAFILFYDFVDLFRVIL) constitute an intramembrane region (helical). Residues 239 to 254 (KILAKKENKNNNKSRR) lie on the Cytoplasmic side of the membrane.

Belongs to the BI1 family.

The protein resides in the endoplasmic reticulum membrane. In Dictyostelium discoideum (Social amoeba), this protein is Bax inhibitor 1 homolog.